Reading from the N-terminus, the 884-residue chain is Translation initiation factor IF-2 (884 aa).

2 stretches are compositionally biased toward basic and acidic residues: residues 110–153 and 193–234; these read AKAK…KEKA and KQKE…DHHV. The tract at residues 110–291 is disordered; the sequence is AKAKAEADAK…NRSTAPQSMA (182 aa). Positions 255–268 are enriched in basic residues; that stretch reads GRRARNKPTNKKRG. One can recognise a tr-type G domain in the interval 384–553; sequence TRAPVVTIMG…LLQSEVLELK (170 aa). The tract at residues 393-400 is G1; the sequence is GHVDHGKT. Residue 393 to 400 coordinates GTP; sequence GHVDHGKT. Positions 418–422 are G2; that stretch reads GITQH. Residues 439-442 are G3; sequence DTPG. Residues 439–443 and 493–496 contribute to the GTP site; these read DTPGH and NKMD. The segment at 493-496 is G4; it reads NKMD. A G5 region spans residues 529–531; the sequence is SAK.

Belongs to the TRAFAC class translation factor GTPase superfamily. Classic translation factor GTPase family. IF-2 subfamily.

Its subcellular location is the cytoplasm. In terms of biological role, one of the essential components for the initiation of protein synthesis. Protects formylmethionyl-tRNA from spontaneous hydrolysis and promotes its binding to the 30S ribosomal subunits. Also involved in the hydrolysis of GTP during the formation of the 70S ribosomal complex. The chain is Translation initiation factor IF-2 from Shewanella denitrificans (strain OS217 / ATCC BAA-1090 / DSM 15013).